Consider the following 105-residue polypeptide: Large ribosomal subunit protein bL21 (105 aa).

It belongs to the bacterial ribosomal protein bL21 family. In terms of assembly, part of the 50S ribosomal subunit. Contacts protein L20.

This protein binds to 23S rRNA in the presence of protein L20. The chain is Large ribosomal subunit protein bL21 from Porphyromonas gingivalis (strain ATCC BAA-308 / W83).